We begin with the raw amino-acid sequence, 742 residues long: MDKFWWHAAWGLCLVPLSLAQIDLNITCRFAGVFHVEKNGRYSISRTEAADLCKAFNSTLPTMAQMEKALSIGFETCRYGFIEGHVVIPRIHPNSICAANNTGVYILTSNTSQYDTYCFNASAPPEEDCTSVTDLPNAFDGPITITIVNRDGTRYVQKGEYRTNPEDIYPSNPTDDDVSSGSSSERSSTSGGYIFYTFSTVHPIPDEDSPWITDSTDRIPATTLMSTSATATETATKRQETWDWFSWLFLPSESKNHLHTTTQMAGTSSNTISAGWEPNEENEDERDRHLSFSGSGIDDDEDFISSTISTTPRAFDHTKQNQDWTQWNPSHSNPEVLLQTTTRMTDVDRNGTTAYEGNWNPEAHPPLIHHEHHEEEETPHSTSTIQATPSSTTEETATQKEQWFGNRWHEGYRQTPKEDSHSTTGTAAASAHTSHPMQGRTTPSPEDSSWTDFFNPISHPMGRGHQAGRRMDMDSSHSITLQPTANPNTGLVEDLDRTGPLSMTTQQSNSQSFSTSHEGLEEDKDHPTTSTLTSSNRNDVTGGRRDPNHSEGSTTLLEGYTSHYPHTKESRTFIPVTSAKTGSFGVTAVTVGDSNSNVNRSLSGDQDTFHPSGGSHTTHGSESDGHSHGSQEGGANTTSGPIRTPQIPEWLIILASLLALALILAVCIAVNSRRRCGQKKKLVINSGNGAVEDRKPSGLNGEASKSQEMVHLVNKESSETPDQFMTADETRNLQNVDMKIGV.

The signal sequence occupies residues 1-20 (MDKFWWHAAWGLCLVPLSLA). Residues 21–649 (QIDLNITCRF…GPIRTPQIPE (629 aa)) are Extracellular-facing. Residue Asn25 is glycosylated (N-linked (GlcNAc...) asparagine). 3 disulfides stabilise this stretch: Cys28-Cys129, Cys53-Cys118, and Cys77-Cys97. One can recognise a Link domain in the interval 32–120 (GVFHVEKNGR…TSQYDTYCFN (89 aa)). Arg41 lines the hyaluronan pocket. An N-linked (GlcNAc...) asparagine glycan is attached at Asn57. Residues Arg78 and Tyr79 each coordinate hyaluronan. Asn100 is a glycosylation site (N-linked (GlcNAc...) asparagine). Tyr105 provides a ligand contact to hyaluronan. 2 N-linked (GlcNAc...) asparagine glycosylation sites follow: Asn110 and Asn120. Disordered stretches follow at residues 160–189 (EYRTNPEDIYPSNPTDDDVSSGSSSERSST) and 261–285 (TTQMAGTSSNTISAGWEPNEENEDE). Residues 179 to 189 (SSGSSSERSST) show a composition bias toward low complexity. The O-linked (Xyl...) (chondroitin sulfate) serine glycan is linked to Ser180. The stem stretch occupies residues 224–649 (LMSTSATATE…GPIRTPQIPE (426 aa)). Residues 261–273 (TTQMAGTSSNTIS) are compositionally biased toward polar residues. An N-linked (GlcNAc...) asparagine glycan is attached at Asn350. Disordered regions lie at residues 372 to 558 (HHEE…TLLE) and 590 to 642 (TVGD…SGPI). A compositionally biased stretch (low complexity) spans 386-396 (QATPSSTTEET). The span at 407 to 421 (RWHEGYRQTPKEDSH) shows a compositional bias: basic and acidic residues. Over residues 422–435 (STTGTAAASAHTSH) the composition is skewed to low complexity. Polar residues-rich tracts occupy residues 439–452 (GRTTPSPEDSSWTD) and 476–489 (SHSITLQPTANPNT). Over residues 502 to 516 (SMTTQQSNSQSFSTS) the composition is skewed to low complexity. Polar residues predominate over residues 528-539 (TTSTLTSSNRND). Residues Asn548 and Asn599 are each glycosylated (N-linked (GlcNAc...) asparagine). Over residues 592-606 (GDSNSNVNRSLSGDQ) the composition is skewed to polar residues. Positions 619 to 629 (HGSESDGHSHG) are enriched in basic and acidic residues. N-linked (GlcNAc...) asparagine glycosylation occurs at Asn636. Residues 650–670 (WLIILASLLALALILAVCIAV) traverse the membrane as a helical segment. Over 671–742 (NSRRRCGQKK…LQNVDMKIGV (72 aa)) the chain is Cytoplasmic. At Ser672 the chain carries Phosphoserine; by PKC. The segment at 673-691 (RRRCGQKKKLVINSGNGAV) is required for interaction with EZR, MSN and RDX and for co-localization to microvilli. Phosphoserine occurs at positions 686, 697, and 706.

Interacts with PKN2. Interacts with TIAM1 and TIAM2. Interacts with HA, as well as other glycosaminoglycans, collagen, laminin, and fibronectin via its N-terminal segment. Interacts with UNC119. Interacts with PDPN (via extracellular domain); this interaction is required for PDPN-mediated directional migration and regulation of lamellipodia extension/stabilization during cell spreading and migration. Interacts with RDX, EZR and MSN. Interacts with EGFR. Interacts with CD74; this complex is essential for the MIF-induced signaling cascade that results in B cell survival. Post-translationally, proteolytically cleaved in the extracellular matrix by specific proteinases (possibly MMPs) in several cell lines and tumors. In terms of processing, N-glycosylated. O-glycosylated; contains chondroitin sulfate glycans which can be more or less sulfated and whose number may affect the accessibility of specific proteinases to their cleavage site(s). It is uncertain if O-glycosylation occurs on Thr-637 or Thr-638. Post-translationally, phosphorylated; activation of PKC results in the dephosphorylation of Ser-706 (constitutive phosphorylation site), and the phosphorylation of Ser-672. Detected in fibroblasts and urine (at protein level). Detected in placenta (at protein level). Isoform 10 (epithelial isoform) is expressed by cells of epithelium and highly expressed by carcinomas. Expression is repressed in neuroblastoma cells.

It is found in the cell membrane. It localises to the cell projection. The protein localises to the microvillus. Its subcellular location is the secreted. Cell-surface receptor that plays a role in cell-cell interactions, cell adhesion and migration, helping them to sense and respond to changes in the tissue microenvironment. Participates thereby in a wide variety of cellular functions including the activation, recirculation and homing of T-lymphocytes, hematopoiesis, inflammation and response to bacterial infection. Engages, through its ectodomain, extracellular matrix components such as hyaluronan/HA, collagen, growth factors, cytokines or proteases and serves as a platform for signal transduction by assembling, via its cytoplasmic domain, protein complexes containing receptor kinases and membrane proteases. Such effectors include PKN2, the RhoGTPases RAC1 and RHOA, Rho-kinases and phospholipase C that coordinate signaling pathways promoting calcium mobilization and actin-mediated cytoskeleton reorganization essential for cell migration and adhesion. This chain is CD44 antigen (CD44), found in Homo sapiens (Human).